The chain runs to 181 residues: Adenine phosphoribosyltransferase (181 aa).

This sequence belongs to the purine/pyrimidine phosphoribosyltransferase family. In terms of assembly, homodimer.

The protein localises to the cytoplasm. The enzyme catalyses AMP + diphosphate = 5-phospho-alpha-D-ribose 1-diphosphate + adenine. It functions in the pathway purine metabolism; AMP biosynthesis via salvage pathway; AMP from adenine: step 1/1. In terms of biological role, catalyzes a salvage reaction resulting in the formation of AMP, that is energically less costly than de novo synthesis. This is Adenine phosphoribosyltransferase from Shewanella loihica (strain ATCC BAA-1088 / PV-4).